Reading from the N-terminus, the 140-residue chain is Nucleoside diphosphate kinase (140 aa).

6 residues coordinate ATP: Lys11, Phe59, Arg87, Thr93, Arg104, and Asn114. His117 functions as the Pros-phosphohistidine intermediate in the catalytic mechanism.

It belongs to the NDK family. As to quaternary structure, homotetramer. Requires Mg(2+) as cofactor.

Its subcellular location is the cytoplasm. It catalyses the reaction a 2'-deoxyribonucleoside 5'-diphosphate + ATP = a 2'-deoxyribonucleoside 5'-triphosphate + ADP. The enzyme catalyses a ribonucleoside 5'-diphosphate + ATP = a ribonucleoside 5'-triphosphate + ADP. In terms of biological role, major role in the synthesis of nucleoside triphosphates other than ATP. The ATP gamma phosphate is transferred to the NDP beta phosphate via a ping-pong mechanism, using a phosphorylated active-site intermediate. This chain is Nucleoside diphosphate kinase, found in Rhodospirillum rubrum (strain ATCC 11170 / ATH 1.1.1 / DSM 467 / LMG 4362 / NCIMB 8255 / S1).